A 59-amino-acid polypeptide reads, in one-letter code: MFAGLPSLTHEQQQKAVERIQELMSQGMSSGQAIALVAEELRANHSGERIVARFEDEDE.

Belongs to the UPF0181 family.

The sequence is that of UPF0181 protein YoaH from Escherichia coli O127:H6 (strain E2348/69 / EPEC).